Reading from the N-terminus, the 182-residue chain is Peptide methionine sulfoxide reductase MsrA (182 aa).

The active site involves Cys-13.

Belongs to the MsrA Met sulfoxide reductase family.

The enzyme catalyses L-methionyl-[protein] + [thioredoxin]-disulfide + H2O = L-methionyl-(S)-S-oxide-[protein] + [thioredoxin]-dithiol. The catalysed reaction is [thioredoxin]-disulfide + L-methionine + H2O = L-methionine (S)-S-oxide + [thioredoxin]-dithiol. Its function is as follows. Has an important function as a repair enzyme for proteins that have been inactivated by oxidation. Catalyzes the reversible oxidation-reduction of methionine sulfoxide in proteins to methionine. In Mycobacterium bovis (strain ATCC BAA-935 / AF2122/97), this protein is Peptide methionine sulfoxide reductase MsrA.